A 714-amino-acid chain; its full sequence is Fatty acid oxidation complex subunit alpha (714 aa).

The segment at 1–190 (MEMASAFTLN…KLGLVDDVVP (190 aa)) is enoyl-CoA hydratase. Residues 306-714 (APLNSVGILG…FWKTTATDLQ (409 aa)) form a 3-hydroxyacyl-CoA dehydrogenase region.

In the N-terminal section; belongs to the enoyl-CoA hydratase/isomerase family. It in the central section; belongs to the 3-hydroxyacyl-CoA dehydrogenase family. As to quaternary structure, heterotetramer of two alpha chains (FadJ) and two beta chains (FadI).

The protein resides in the cytoplasm. It carries out the reaction a (3S)-3-hydroxyacyl-CoA = a (2E)-enoyl-CoA + H2O. The catalysed reaction is a 4-saturated-(3S)-3-hydroxyacyl-CoA = a (3E)-enoyl-CoA + H2O. It catalyses the reaction a (3S)-3-hydroxyacyl-CoA + NAD(+) = a 3-oxoacyl-CoA + NADH + H(+). The enzyme catalyses (3S)-3-hydroxybutanoyl-CoA = (3R)-3-hydroxybutanoyl-CoA. It participates in lipid metabolism; fatty acid beta-oxidation. In terms of biological role, catalyzes the formation of a hydroxyacyl-CoA by addition of water on enoyl-CoA. Also exhibits 3-hydroxyacyl-CoA epimerase and 3-hydroxyacyl-CoA dehydrogenase activities. This chain is Fatty acid oxidation complex subunit alpha, found in Escherichia coli (strain ATCC 8739 / DSM 1576 / NBRC 3972 / NCIMB 8545 / WDCM 00012 / Crooks).